Consider the following 238-residue polypeptide: uncharacterized protein (238 aa).

The protein belongs to the chlamydial CPn_0658/CT_538/TC_0825 family.

This is an uncharacterized protein from Chlamydia trachomatis serovar D (strain ATCC VR-885 / DSM 19411 / UW-3/Cx).